Reading from the N-terminus, the 77-residue chain is MLCLPVFIILLLLASPAASNPLKTRIQSDLIRAALEDADMKNEKNILSSIMGSLGTIGNVVGNVCCSITKSCCASEE.

Positions 1–19 (MLCLPVFIILLLLASPAAS) are cleaved as a signal peptide. Positions 20–44 (NPLKTRIQSDLIRAALEDADMKNEK) are excised as a propeptide.

It belongs to the conotoxin T superfamily. Post-translationally, contains 2 disulfide bonds that can be either 'C1-C3, C2-C4' or 'C1-C4, C2-C3', since these disulfide connectivities have been observed for conotoxins with cysteine framework V (for examples, see AC P0DQQ7 and AC P81755). As to expression, expressed by the venom duct.

It is found in the secreted. In Conus arenatus (Sand-dusted cone), this protein is Conotoxin Ar5.1 b.